The primary structure comprises 316 residues: 4-hydroxy-3-methylbut-2-enyl diphosphate reductase (316 aa).

Cys12 provides a ligand contact to [4Fe-4S] cluster. Positions 41 and 74 each coordinate (2E)-4-hydroxy-3-methylbut-2-enyl diphosphate. 2 residues coordinate dimethylallyl diphosphate: His41 and His74. The isopentenyl diphosphate site is built by His41 and His74. Residue Cys96 coordinates [4Fe-4S] cluster. (2E)-4-hydroxy-3-methylbut-2-enyl diphosphate is bound at residue His124. His124 is a dimethylallyl diphosphate binding site. His124 is an isopentenyl diphosphate binding site. Catalysis depends on Glu126, which acts as the Proton donor. Thr167 is a binding site for (2E)-4-hydroxy-3-methylbut-2-enyl diphosphate. Residue Cys197 coordinates [4Fe-4S] cluster. 4 residues coordinate (2E)-4-hydroxy-3-methylbut-2-enyl diphosphate: Ser225, Ser226, Asn227, and Ser269. Dimethylallyl diphosphate contacts are provided by Ser225, Ser226, Asn227, and Ser269. Residues Ser225, Ser226, Asn227, and Ser269 each coordinate isopentenyl diphosphate.

This sequence belongs to the IspH family. As to quaternary structure, homodimer. Requires [4Fe-4S] cluster as cofactor.

The catalysed reaction is isopentenyl diphosphate + 2 oxidized [2Fe-2S]-[ferredoxin] + H2O = (2E)-4-hydroxy-3-methylbut-2-enyl diphosphate + 2 reduced [2Fe-2S]-[ferredoxin] + 2 H(+). The enzyme catalyses dimethylallyl diphosphate + 2 oxidized [2Fe-2S]-[ferredoxin] + H2O = (2E)-4-hydroxy-3-methylbut-2-enyl diphosphate + 2 reduced [2Fe-2S]-[ferredoxin] + 2 H(+). The protein operates within isoprenoid biosynthesis; dimethylallyl diphosphate biosynthesis; dimethylallyl diphosphate from (2E)-4-hydroxy-3-methylbutenyl diphosphate: step 1/1. Its pathway is isoprenoid biosynthesis; isopentenyl diphosphate biosynthesis via DXP pathway; isopentenyl diphosphate from 1-deoxy-D-xylulose 5-phosphate: step 6/6. Functionally, catalyzes the conversion of 1-hydroxy-2-methyl-2-(E)-butenyl 4-diphosphate (HMBPP) into a mixture of isopentenyl diphosphate (IPP) and dimethylallyl diphosphate (DMAPP). Acts in the terminal step of the DOXP/MEP pathway for isoprenoid precursor biosynthesis. This chain is 4-hydroxy-3-methylbut-2-enyl diphosphate reductase, found in Escherichia coli (strain UTI89 / UPEC).